We begin with the raw amino-acid sequence, 415 residues long: Metal tolerance protein 5 (415 aa).

Topologically, residues 1–124 are cytoplasmic; sequence MAAAVAGGGE…REKVARSETL (124 aa). A helical transmembrane segment spans residues 125-145; the sequence is AIRLSNIANMVLFAAKVYASV. At 146 to 150 the chain is on the vacuolar side; the sequence is RSGSL. Residues 151–171 traverse the membrane as a helical segment; it reads AIIASTLDSLLDLLSGFILWF. Residues 172-192 lie on the Cytoplasmic side of the membrane; sequence TAFSMQTPNPYRYPIGKKRMQ. A helical membrane pass occupies residues 193–213; that stretch reads PLGILVFASVMATLGLQIILE. The Vacuolar portion of the chain corresponds to 214–232; that stretch reads SVRSLLSDGDEFSLTKEQE. A helical membrane pass occupies residues 233 to 253; it reads KWVVDIMLAVTLVKLALVLYC. The Cytoplasmic segment spans residues 254–268; sequence RTFTNEIVKAYAQDH. A helical membrane pass occupies residues 269-291; sequence FFDVITNMIGLVAALLATYIEGW. Residues 292-293 lie on the Vacuolar side of the membrane; the sequence is ID. Residues 294-313 form a helical membrane-spanning segment; the sequence is PVGAIILAIYTIRTWSMTVL. The Cytoplasmic portion of the chain corresponds to 314-415; it reads ENVHSLVGQS…RPEHALSHEK (102 aa).

It belongs to the cation diffusion facilitator (CDF) transporter (TC 2.A.4) family. SLC30A subfamily.

The protein localises to the vacuole membrane. Its function is as follows. Involved in sequestration of excess metal in the cytoplasm into vacuoles to maintain metal homeostasis. The polypeptide is Metal tolerance protein 5 (MTP5) (Oryza sativa subsp. japonica (Rice)).